Here is a 201-residue protein sequence, read N- to C-terminus: Large ribosomal subunit protein uL4 (201 aa).

The tract at residues 45–73 (AQKTRAEVTGSGKKPWRQKGTGRARAGSV) is disordered.

Belongs to the universal ribosomal protein uL4 family. Part of the 50S ribosomal subunit.

Functionally, one of the primary rRNA binding proteins, this protein initially binds near the 5'-end of the 23S rRNA. It is important during the early stages of 50S assembly. It makes multiple contacts with different domains of the 23S rRNA in the assembled 50S subunit and ribosome. Its function is as follows. Forms part of the polypeptide exit tunnel. The sequence is that of Large ribosomal subunit protein uL4 from Yersinia pseudotuberculosis serotype O:1b (strain IP 31758).